A 790-amino-acid chain; its full sequence is Protein SEY1 (790 aa).

Residues 1-692 (MELSEGELSH…KRSIVQHITQ (692 aa)) are Cytoplasmic-facing. Residues 55 to 284 (GNNYHIISVF…VSNELFKPEY (230 aa)) enclose the GB1/RHD3-type G domain. 65-72 (GSQSTGKS) is a binding site for GTP. The chain crosses the membrane as a helical span at residues 693–713 (IPYYIYLIILVLGWNEFMAII). At 714–716 (RNP) the chain is on the lumenal side. The chain crosses the membrane as a helical span at residues 717–737 (LFFSLSIVLGATVYVLYYLGL). Residues 738–790 (LRPALVVAQRTMDEVIVMAKTKLREVLIDDHEVTGRQLNKMAGSKENIELDDM) are Cytoplasmic-facing.

This sequence belongs to the TRAFAC class dynamin-like GTPase superfamily. GB1/RHD3 GTPase family. RHD3 subfamily.

Its subcellular location is the endoplasmic reticulum membrane. Its function is as follows. Cooperates with the reticulon proteins and tubule-shaping DP1 family proteins to generate and maintain the structure of the tubular endoplasmic reticulum network. Has GTPase activity, which is required for its function in ER organization. The protein is Protein SEY1 of Candida albicans (strain WO-1) (Yeast).